A 213-amino-acid polypeptide reads, in one-letter code: Motile sperm domain-containing protein 1 (213 aa).

Residues 16–143 form the MSP domain; sequence PVFVFPTELI…KEHLTESVFF (128 aa). 2 helical membrane passes run 159–179 and 191–211; these read SLLTVFLGVVCIAALMLPTLG and LSVNQKLVAAYILGLITMAIL. The short motif at 205 to 208 is the Nuclear export signal element; it reads LITM.

As to expression, widely expressed. Shows highest expression in ribs, and slightly lower levels of expression in heart, kidney, muscle, thymus, calvariae and lung. Also detected at low levels in spleen and liver.

It is found in the endoplasmic reticulum membrane. It localises to the golgi apparatus membrane. Its function is as follows. Plays a role in differentiation and/or proliferation of mesenchymal stem cells. Proposed to be involved in epithelial-to-mesenchymal transition (EMT). However, another study suggests that it is not required for EMT or stem cell self-renewal and acts during later stages of differentiation. The sequence is that of Motile sperm domain-containing protein 1 (Mospd1) from Mus musculus (Mouse).